The sequence spans 156 residues: CD-NTase/cGAS isopeptidase (156 aa).

An MPN domain is found at 16–156 (LVVIMGHVVT…LITVFKKIES (141 aa)). Glu39 serves as the catalytic Proton donor/acceptor. His101, His103, and Asp114 together coordinate Zn(2+). A JAMM motif motif is present at residues 101 to 114 (HTHPEDRPFPSATD).

This sequence belongs to the peptidase M67B family. Cap3 isopeptidase subfamily. Zn(2+) serves as cofactor.

Its activity is regulated as follows. Cleavage of conjugated proteins is inhibited by EDTA. Functionally, metalloprotease priming reversal component of a CBASS system. CBASS (cyclic oligonucleotide-based antiphage signaling system) provides immunity against bacteriophages. The CD-NTase protein (DncV) synthesizes cyclic nucleotides in response to infection; these serve as specific second messenger signals. The signals activate a diverse range of effectors, leading to bacterial cell death and thus abortive phage infection. A type II-A(GA) CBASS system. In terms of biological role, reverses the primed state of DncV, the CD-NTase. Cleaves a DncV-GFP (green fluorescent protein) fusion protein precisely at the C-terminus of DncV. Overexpression decreases the efficacy of CBASS protection against phages T2, T4, T5 and T6, blocks formation of DncV-conjugates in vivo, and inhibits in vivo activation of DncV. Antagonism of phage defense upon overexpression is CBASS-system specific, Cap3 from this bacteria only antagonizes its cognate CBASS system and not that of C.freundii, E.coli or E.hormaechei. Its function is as follows. Protects E.coli against phage infection. When the CBASS operon (capV-dncV-cap2-cap3) is introduced in E.coli MG1655 there is about 100-fold protection against phages P1 and T2. When the operon is introduced in E.coli MG1655 there is a more than 10(3) decrease in the efficiency of T2 plaque formation. Protects 100-fold against phage T5, offers no protection against T7. When the operon is introduced in E.coli MG1655 it protects against phages T2, T4, T5 and T6. Another paper shows the operon confers protection against phages P1, T2, T5 and T6 but not T4 or lambda. The protein is CD-NTase/cGAS isopeptidase of Vibrio cholerae serotype O1 (strain ATCC 39315 / El Tor Inaba N16961).